The chain runs to 883 residues: Alanine--tRNA ligase (883 aa).

Zn(2+) contacts are provided by His570, His574, Cys672, and His676.

This sequence belongs to the class-II aminoacyl-tRNA synthetase family. Zn(2+) is required as a cofactor.

Its subcellular location is the cytoplasm. The enzyme catalyses tRNA(Ala) + L-alanine + ATP = L-alanyl-tRNA(Ala) + AMP + diphosphate. Catalyzes the attachment of alanine to tRNA(Ala) in a two-step reaction: alanine is first activated by ATP to form Ala-AMP and then transferred to the acceptor end of tRNA(Ala). Also edits incorrectly charged Ser-tRNA(Ala) and Gly-tRNA(Ala) via its editing domain. The protein is Alanine--tRNA ligase of Heliobacterium modesticaldum (strain ATCC 51547 / Ice1).